The following is a 555-amino-acid chain: F-box only protein 33 (555 aa).

Positions 65-111 (AAGAASLPSELIVHIFSFLPAPDRLRASASCSHWRECLFYPALWPQL) constitute an F-box domain.

Part of the SCF (SKP1-CUL1-F-box) E3 ubiquitin-protein ligase complex SCF(FBXO33) formed of CUL1, SKP1, RBX1 and FBXO33. Interacts via its N-terminus with YBX1 CSD domain. Directly interacts with SKP1 and CUL1.

It participates in protein modification; protein ubiquitination. Its function is as follows. Substrate recognition component of a SCF (SKP1-CUL1-F-box protein) E3 ubiquitin-protein ligase complex which mediates the ubiquitination and subsequent proteasomal degradation of target proteins. Probably recognizes and binds to phosphorylated target proteins. Recognizes YBX1. This chain is F-box only protein 33 (FBXO33), found in Homo sapiens (Human).